The sequence spans 386 residues: Porin PorA (386 aa).

A signal peptide spans 1 to 35 (MKRTLGHALIIIGAALIVIAVLLPTFLVPRLRVIP). Polar residues predominate over residues 53–63 (DSSQLGKNEPT). Residues 53-78 (DSSQLGKNEPTPNRKNDPRCKAETDE) form a disordered region. The segment covering 64-78 (PNRKNDPRCKAETDE) has biased composition (basic and acidic residues).

The protein belongs to the PorA family.

It is found in the secreted. The protein localises to the cell wall. Functionally, forms water-filled channels that favor the permeation of cations. This is Porin PorA from Corynebacterium amycolatum.